Reading from the N-terminus, the 357-residue chain is MAAAAKPSNLSLVVHGPGDLRLENYPIPEPGPNEVLLRMHSVGICGSDVHYWEDGRIGNFIVKKPMVLGHEASGTVEKVGSLVKHLKPGDRVAIEPGAPRENDEFCKIGRYNLSPSIFFCATPPDDGNLCRFYKHNAAFCYKLPDNVTFEEGAMIEPLSVGIHACRRGGVTLGHKVLVCGAGPIGMVTLLVAKAMGAAQVVVTDLSATRLSKAKEIGADLVLQISKESPQEIARKVEGLLGCKPEVTIECTGAGASIQAGIYATHSGGTLVLVGLGSEMTTIPLLHAAIREVDIKGVFRYCNTWPVAISMLASKSVNVKPLITHRFPLEKALEAFETFKKGLGLKIMLKCDPNDQNP.

N-acetylalanine is present on Ala-2. Cys-45 provides a ligand contact to Zn(2+). Position 51 (Tyr-51) interacts with substrate. The Zn(2+) site is built by His-70 and Glu-71. Residue Glu-156 participates in substrate binding. The NAD(+) site is built by Ile-184, Asp-204, and Arg-209. Phosphoserine is present on residues Ser-211 and Ser-225. NAD(+) is bound by residues 273–275 and 297–299; these read VGL and VFR. Substrate-binding residues include Arg-299 and Tyr-300.

This sequence belongs to the zinc-containing alcohol dehydrogenase family. As to quaternary structure, homotetramer. It depends on Zn(2+) as a cofactor.

The protein localises to the mitochondrion membrane. It localises to the cell projection. The protein resides in the cilium. It is found in the flagellum. It carries out the reaction xylitol + NAD(+) = D-xylulose + NADH + H(+). The enzyme catalyses L-iditol + NAD(+) = keto-L-sorbose + NADH + H(+). The catalysed reaction is keto-D-fructose + NADH + H(+) = D-sorbitol + NAD(+). In terms of biological role, polyol dehydrogenase that catalyzes the reversible NAD(+)-dependent oxidation of various sugar alcohols. Is active with xylitol, L-iditol and D-sorbitol (D-glucitol) as substrates, leading to the C2-oxidized products D-xylulose, L-sorbose and D-fructose, respectively. Is a key enzyme in the polyol pathway that interconverts glucose and fructose via sorbitol, which constitutes an important alternate route for glucose metabolism. May play a role in sperm motility by using sorbitol as an alternative energy source for sperm motility. This Pongo abelii (Sumatran orangutan) protein is Sorbitol dehydrogenase (SORD).